The sequence spans 371 residues: Chaperone protein DnaJ (371 aa).

Residues 5 to 70 (DYYEVLGVNR…QKRAAYDQYG (66 aa)) form the J domain. The segment at 31 to 52 (KYHPDRNPDNPKAEESFKEAKE) is disordered. The segment covering 32–52 (YHPDRNPDNPKAEESFKEAKE) has biased composition (basic and acidic residues). A CR-type zinc finger spans residues 132-210 (RTETKIRIPV…CQGAGRVKKH (79 aa)). Positions 145, 148, 162, 165, 184, 187, 198, and 201 each coordinate Zn(2+). CXXCXGXG motif repeat units follow at residues 145–152 (CETCHGSG), 162–169 (CTTCGGHG), 184–191 (CPKCHGSG), and 198–205 (CPSCQGAG).

This sequence belongs to the DnaJ family. In terms of assembly, homodimer. Zn(2+) serves as cofactor.

Its subcellular location is the cytoplasm. Functionally, participates actively in the response to hyperosmotic and heat shock by preventing the aggregation of stress-denatured proteins and by disaggregating proteins, also in an autonomous, DnaK-independent fashion. Unfolded proteins bind initially to DnaJ; upon interaction with the DnaJ-bound protein, DnaK hydrolyzes its bound ATP, resulting in the formation of a stable complex. GrpE releases ADP from DnaK; ATP binding to DnaK triggers the release of the substrate protein, thus completing the reaction cycle. Several rounds of ATP-dependent interactions between DnaJ, DnaK and GrpE are required for fully efficient folding. Also involved, together with DnaK and GrpE, in the DNA replication of plasmids through activation of initiation proteins. The chain is Chaperone protein DnaJ from Methylovorus sp. (strain SS1 / DSM 11726).